The chain runs to 495 residues: Ribitol 5-phosphate transferase FKRP (495 aa).

Over 1-6 the chain is Cytoplasmic; the sequence is MRLTRC. Residues 7 to 29 form a helical membrane-spanning segment; it reads QAALAAAITLNLLVLFYVSWLQH. At 30–495 the chain is on the lumenal side; the sequence is QPRNSRARGP…PALLSLTGSG (466 aa). A disulfide bridge links Cys168 with Cys191. N-linked (GlcNAc...) asparagine glycosylation is found at Asn172 and Asn209. Residues Cys289, Cys296, Cys317, and Cys318 each contribute to the Zn(2+) site. A zinc finger loop region spans residues 289–318; it reads CNKETTRCFGTVVGDTPAYLYEERWTPPCC. Residues Gly345, Arg352, 359–364, 437–438, and 480–482 contribute to the CDP-L-ribitol site; these read WDYDVD, QD, and NPQ. Positions 360, 362, and 364 each coordinate Mg(2+).

It belongs to the LicD transferase family. Homodimer; disulfide-linked. Tetramer. Forms a complex composed of FKRP, FKTN/fukutin, and RXYLT1/TMEM5. Also exists as large multimeric protein complexes. May interact with the dystrophin-glycoprotein complex (DGC). Mg(2+) is required as a cofactor. Post-translationally, N-glycosylated. Expressed in the retina (at protein level). Expressed predominantly in skeletal muscle, placenta, and heart and relatively weakly in brain, lung, liver, kidney, and pancreas.

Its subcellular location is the golgi apparatus membrane. It localises to the secreted. The protein resides in the cell membrane. The protein localises to the sarcolemma. It is found in the rough endoplasmic reticulum. Its subcellular location is the cytoplasm. It carries out the reaction 3-O-[Rib-ol-P-3-beta-D-GalNAc-(1-&gt;3)-beta-D-GlcNAc-(1-&gt;4)-(O-6-P-alpha-D-Man)]-Thr-[protein] + CDP-L-ribitol = 3-O-[Rib-ol-P-Rib-ol-P-3-beta-D-GalNAc-(1-&gt;3)-beta-D-GlcNAc-(1-&gt;4)-(O-6-P-alpha-D-Man)]-Thr-[protein] + CMP + H(+). The protein operates within protein modification; protein glycosylation. Its function is as follows. Catalyzes the transfer of a ribitol 5-phosphate from CDP-L-ribitol to the ribitol 5-phosphate previously attached by FKTN/fukutin to the phosphorylated O-mannosyl trisaccharide (N-acetylgalactosamine-beta-3-N-acetylglucosamine-beta-4-(phosphate-6-)mannose), a carbohydrate structure present in alpha-dystroglycan (DAG1). This constitutes the second step in the formation of the ribose 5-phosphate tandem repeat which links the phosphorylated O-mannosyl trisaccharide to the ligand binding moiety composed of repeats of 3-xylosyl-alpha-1,3-glucuronic acid-beta-1. The chain is Ribitol 5-phosphate transferase FKRP from Homo sapiens (Human).